Here is a 99-residue protein sequence, read N- to C-terminus: Plastocyanin (99 aa).

The Plastocyanin-like domain maps to 1-99 (IEVLLGSDDG…AGMVGKVTVN (99 aa)). His37, Cys84, His87, and Met92 together coordinate Cu cation.

This sequence belongs to the plastocyanin family. Cu(2+) is required as a cofactor.

Its subcellular location is the plastid. It is found in the chloroplast thylakoid membrane. Participates in electron transfer between P700 and the cytochrome b6-f complex in photosystem I. This Solanum crispum (Chilean potato-tree) protein is Plastocyanin (PETE).